A 425-amino-acid chain; its full sequence is Threonylcarbamoyladenosine tRNA methylthiotransferase (425 aa).

The Radical SAM core domain maps to 60 to 295 (RKNELIEVLS…RSYTRYTDER (236 aa)). Positions 74, 78, and 81 each coordinate [4Fe-4S] cluster. Residues 293 to 355 (DERIGELHRV…KFSMISKPAS (63 aa)) enclose the TRAM domain. The helical transmembrane segment at 362-382 (PLSLMHLFPLAVFCLVLITLY) threads the bilayer.

The protein belongs to the methylthiotransferase family. CDKAL1 subfamily. [4Fe-4S] cluster is required as a cofactor.

The protein resides in the membrane. The catalysed reaction is N(6)-L-threonylcarbamoyladenosine(37) in tRNA + (sulfur carrier)-SH + AH2 + 2 S-adenosyl-L-methionine = 2-methylsulfanyl-N(6)-L-threonylcarbamoyladenosine(37) in tRNA + (sulfur carrier)-H + 5'-deoxyadenosine + L-methionine + A + S-adenosyl-L-homocysteine + 2 H(+). In terms of biological role, catalyzes the methylthiolation of N6-threonylcarbamoyladenosine (t(6)A), leading to the formation of 2-methylthio-N6-threonylcarbamoyladenosine (ms(2)t(6)A) at position 37 in tRNAs that read codons beginning with adenine. The polypeptide is Threonylcarbamoyladenosine tRNA methylthiotransferase (Caenorhabditis elegans).